We begin with the raw amino-acid sequence, 363 residues long: NADH-quinone oxidoreductase subunit H (363 aa).

The next 10 helical transmembrane spans lie at 29 to 49 (VLKI…YVVW), 62 to 82 (GPMY…KLLF), 94 to 114 (VIFV…WAVV), 127 to 147 (VGLL…ILAG), 166 to 186 (VVSY…AAGS), 202 to 222 (FFDW…VSGV), 239 to 257 (IVAG…LFFL), 264 to 286 (ILVS…QGWV), 293 to 313 (LIDW…LFFA), and 339 to 359 (FIPL…SGVI).

The protein belongs to the complex I subunit 1 family. NDH-1 is composed of 14 different subunits. Subunits NuoA, H, J, K, L, M, N constitute the membrane sector of the complex.

The protein localises to the cell inner membrane. It carries out the reaction a quinone + NADH + 5 H(+)(in) = a quinol + NAD(+) + 4 H(+)(out). Functionally, NDH-1 shuttles electrons from NADH, via FMN and iron-sulfur (Fe-S) centers, to quinones in the respiratory chain. The immediate electron acceptor for the enzyme in this species is believed to be ubiquinone. Couples the redox reaction to proton translocation (for every two electrons transferred, four hydrogen ions are translocated across the cytoplasmic membrane), and thus conserves the redox energy in a proton gradient. This subunit may bind ubiquinone. The polypeptide is NADH-quinone oxidoreductase subunit H (Xylella fastidiosa (strain M12)).